Here is a 345-residue protein sequence, read N- to C-terminus: MKENITVAMLAELVDGEVIGDGEVLVGNFVSLETAGEGDITFLVKAGDQDLLTSTKAGAVIVHRKVEVESPATLIKVDDAYLAAAKIHTFLLEDEFSPEGIHRSAFVGEGCQISSEVTIKALVSIGNRVVIGPRTRIESGVAIGDDVTIGEDCLLKANVTIADGSQLGNGVTIHSGTVIGSDGYGYATDKMGFHYKRPQVGTVRVDDNVEIGANSCVDRATYGLTWIKSGAKIDNLVQIAHNVVVGENSLIVSQVGISGSTSLGRNVVMGGKAAAVGHLQIGDGVMIAGGSGVLSNLSAGAVVGGIPARPIKQWRKSVVLTTKLPEMQKDIRALKKSVEELAGKN.

Catalysis depends on histidine 241, which acts as the Proton acceptor.

The protein belongs to the transferase hexapeptide repeat family. LpxD subfamily. In terms of assembly, homotrimer.

The catalysed reaction is a UDP-3-O-[(3R)-3-hydroxyacyl]-alpha-D-glucosamine + a (3R)-hydroxyacyl-[ACP] = a UDP-2-N,3-O-bis[(3R)-3-hydroxyacyl]-alpha-D-glucosamine + holo-[ACP] + H(+). Its pathway is bacterial outer membrane biogenesis; LPS lipid A biosynthesis. Catalyzes the N-acylation of UDP-3-O-acylglucosamine using 3-hydroxyacyl-ACP as the acyl donor. Is involved in the biosynthesis of lipid A, a phosphorylated glycolipid that anchors the lipopolysaccharide to the outer membrane of the cell. The sequence is that of UDP-3-O-acylglucosamine N-acyltransferase from Desulfotalea psychrophila (strain LSv54 / DSM 12343).